We begin with the raw amino-acid sequence, 271 residues long: MTLLTVKHLTITDTWTDQPLVSDVNFTLTKGETLGVIGESGSGKSITCKSIIGLNPERLGVTGEIIFDGTSMLSLSESQLKKYRGKDIAMVMQQGSRAFDPSTTVGKQMFETMKVHTSMSTQEIEKTLIEYMDYLSLKDPKRILKSYPYMLSGGMLQRLMIALALALKPKLIIADEPTTALDTITQYDVLEAFIDIKKHFDCAMIFISHDLTVINKIADRVVVMKNGQLIEQGTRESVLHHPEHVYTKYLLSTKKKINDHFKHVMRGDVHD.

The region spanning 6 to 251 is the ABC transporter domain; it reads VKHLTITDTW…PEHVYTKYLL (246 aa). ATP is bound at residue 38–45; the sequence is GESGSGKS.

This sequence belongs to the ABC transporter superfamily. In terms of assembly, the complex is composed of two ATP-binding proteins (CntD and CntF), two transmembrane proteins (CntB and CntC) and a solute-binding protein (CntA).

It is found in the cell membrane. With respect to regulation, nickel/cobalt import is reduced in the presence of zinc. Its function is as follows. Part of the ABC transporter complex CntABCDF (Opp1) involved in the uptake of metal in complex with the metallophore staphylopine (StP). Involved in the import of divalent metals ions such as nickel, cobalt and zinc. Probably responsible for energy coupling to the transport system. Plays a major role in nickel/cobalt import in zinc-depleted conditions. Contributes to virulence. Required for full urease activity in vitro. The polypeptide is Metal-staphylopine import system ATP-binding protein CntD (Staphylococcus aureus (strain NCTC 8325 / PS 47)).